The following is a 199-amino-acid chain: FMN-dependent NADH:quinone oxidoreductase (199 aa).

Ser-10 is a binding site for FMN.

This sequence belongs to the azoreductase type 1 family. Homodimer. FMN is required as a cofactor.

It catalyses the reaction 2 a quinone + NADH + H(+) = 2 a 1,4-benzosemiquinone + NAD(+). The catalysed reaction is N,N-dimethyl-1,4-phenylenediamine + anthranilate + 2 NAD(+) = 2-(4-dimethylaminophenyl)diazenylbenzoate + 2 NADH + 2 H(+). In terms of biological role, quinone reductase that provides resistance to thiol-specific stress caused by electrophilic quinones. Also exhibits azoreductase activity. Catalyzes the reductive cleavage of the azo bond in aromatic azo compounds to the corresponding amines. The sequence is that of FMN-dependent NADH:quinone oxidoreductase from Cellvibrio japonicus (strain Ueda107) (Pseudomonas fluorescens subsp. cellulosa).